The following is a 473-amino-acid chain: Dol-P-Glc:Glc(2)Man(9)GlcNAc(2)-PP-Dol alpha-1,2-glucosyltransferase (473 aa).

Residues 1–6 (MAQLEG) lie on the Cytoplasmic side of the membrane. The chain crosses the membrane as a helical span at residues 7–27 (YYFSAALSCTFLVSCLLFSAF). Residues 28–64 (SRALREPYMDEIFHLPQAQRYCEGHFSLSQWDPMITT) are Extracellular-facing. Residues 65–85 (LPGLYLVSIGVIKPAIWIFGW) form a helical membrane-spanning segment. At 86–97 (SEHVVCSIGMLR) the chain is on the cytoplasmic side. Residues 98 to 118 (FVNLLFSVGNFYLLYLLFCKV) traverse the membrane as a helical segment. Residues 119–130 (QPRNKAASSIQR) lie on the Extracellular side of the membrane. 2 consecutive transmembrane segments (helical) span residues 131-151 (VLST…FLYY) and 152-172 (TEAG…YGNH). Over 173–175 (KTS) the chain is Extracellular. A helical transmembrane segment spans residues 176-196 (AFLGFCGFMFRQTNIIWAVFC). Residues 197 to 249 (AGNVIAQKLTEAWKTELQKKEDRLPPIKGPFAEFRKILQFLLAYSMSFKNLSM) are Cytoplasmic-facing. Residues 250–270 (LLLLTWPYILLGFLFCAFVVV) traverse the membrane as a helical segment. At 271–283 (NGGIVIGDRSSHE) the chain is on the extracellular side. The helical transmembrane segment at 284–304 (ACLHFPQLFYFFSFTLFFSFP) threads the bilayer. The Cytoplasmic portion of the chain corresponds to 305–323 (HLLSPSKIKTFLSLVWKRR). A helical membrane pass occupies residues 324–344 (ILFFVVTLVSVFLVWKFTYAH). The Extracellular segment spans residues 345-367 (KYLLADNRHYTFYVWKRVFQRYE). A helical membrane pass occupies residues 368–388 (TVKYLLVPAYIFAGWSIADSL). Over 389–392 (KSKS) the chain is Cytoplasmic. The chain crosses the membrane as a helical span at residues 393–413 (IFWNLMFFICLFTVIVPQKLL). Residues 414–436 (EFRYFILPYVIYRLNIPLPPTSR) are Extracellular-facing. The helical transmembrane segment at 437–457 (LICELSCYAVVNFITFFIFLN) threads the bilayer. Topologically, residues 458–473 (KTFQWPNSQDIQRFMW) are cytoplasmic.

Belongs to the ALG10 glucosyltransferase family.

The protein resides in the endoplasmic reticulum membrane. The catalysed reaction is an alpha-D-Glc-(1-&gt;3)-alpha-D-Glc-(1-&gt;3)-alpha-D-Man-(1-&gt;2)-alpha-D-Man-(1-&gt;2)-alpha-D-Man-(1-&gt;3)-[alpha-D-Man-(1-&gt;2)-alpha-D-Man-(1-&gt;3)-[alpha-D-Man-(1-&gt;2)-alpha-D-Man-(1-&gt;6)]-alpha-D-Man-(1-&gt;6)]-beta-D-Man-(1-&gt;4)-beta-D-GlcNAc-(1-&gt;4)-alpha-D-GlcNAc-diphospho-di-trans,poly-cis-dolichol + a di-trans,poly-cis-dolichyl beta-D-glucosyl phosphate = a alpha-D-Glc-(1-&gt;2)-alpha-D-Glc-(1-&gt;3)-alpha-D-Glc-(1-&gt;3)-alpha-D-Man-(1-&gt;2)-alpha-D-Man-(1-&gt;2)-alpha-D-Man-(1-&gt;3)-[alpha-D-Man-(1-&gt;2)-alpha-D-Man-(1-&gt;3)-[alpha-D-Man-(1-&gt;2)-alpha-D-Man-(1-&gt;6)]-alpha-D-Man-(1-&gt;6)]-beta-D-Man-(1-&gt;4)-beta-D-GlcNAc-(1-&gt;4)-alpha-D-GlcNAc-diphospho-di-trans,poly-cis-dolichol + a di-trans,poly-cis-dolichyl phosphate + H(+). The protein operates within protein modification; protein glycosylation. Its function is as follows. Dol-P-Glc:Glc(2)Man(9)GlcNAc(2)-PP-Dol alpha-1,2-glucosyltransferase that operates in the biosynthetic pathway of dolichol-linked oligosaccharides, the glycan precursors employed in protein asparagine (N)-glycosylation. The assembly of dolichol-linked oligosaccharides begins on the cytosolic side of the endoplasmic reticulum membrane and finishes in its lumen. The sequential addition of sugars to dolichol pyrophosphate produces dolichol-linked oligosaccharides containing fourteen sugars, including two GlcNAcs, nine mannoses and three glucoses. Once assembled, the oligosaccharide is transferred from the lipid to nascent proteins by oligosaccharyltransferases. In the lumen of the endoplasmic reticulum, adds the third and last glucose residue from dolichyl phosphate glucose (Dol-P-Glc) onto the lipid-linked oligosaccharide intermediate Glc(2)Man(9)GlcNAc(2)-PP-Dol to produce Glc(3)Man(9)GlcNAc(2)-PP-Dol. The protein is Dol-P-Glc:Glc(2)Man(9)GlcNAc(2)-PP-Dol alpha-1,2-glucosyltransferase of Homo sapiens (Human).